Reading from the N-terminus, the 376-residue chain is Chaperone protein DnaJ (376 aa).

A J domain is found at 5 to 70; the sequence is DYYEVLGLSK…QKKANYDQFG (66 aa). The CR-type zinc finger occupies 133–215; the sequence is GVEKEISITR…CHGKGTVRKN (83 aa). Positions 146, 149, 163, 166, 189, 192, 203, and 206 each coordinate Zn(2+). 4 CXXCXGXG motif repeats span residues 146-153, 163-170, 189-196, and 203-210; these read CDTCAGSG, CDKCGGTG, CDKCGGSG, and CTTCHGKG.

Belongs to the DnaJ family. As to quaternary structure, homodimer. It depends on Zn(2+) as a cofactor.

The protein localises to the cytoplasm. In terms of biological role, participates actively in the response to hyperosmotic and heat shock by preventing the aggregation of stress-denatured proteins and by disaggregating proteins, also in an autonomous, DnaK-independent fashion. Unfolded proteins bind initially to DnaJ; upon interaction with the DnaJ-bound protein, DnaK hydrolyzes its bound ATP, resulting in the formation of a stable complex. GrpE releases ADP from DnaK; ATP binding to DnaK triggers the release of the substrate protein, thus completing the reaction cycle. Several rounds of ATP-dependent interactions between DnaJ, DnaK and GrpE are required for fully efficient folding. Also involved, together with DnaK and GrpE, in the DNA replication of plasmids through activation of initiation proteins. This is Chaperone protein DnaJ from Clostridium novyi (strain NT).